Consider the following 632-residue polypeptide: 1,4-alpha-glucan branching enzyme GlgB (632 aa).

Catalysis depends on Asp310, which acts as the Nucleophile. The active-site Proton donor is the Glu363.

Belongs to the glycosyl hydrolase 13 family. GlgB subfamily. Monomer.

The enzyme catalyses Transfers a segment of a (1-&gt;4)-alpha-D-glucan chain to a primary hydroxy group in a similar glucan chain.. It participates in glycan biosynthesis; glycogen biosynthesis. Functionally, catalyzes the formation of the alpha-1,6-glucosidic linkages in glycogen by scission of a 1,4-alpha-linked oligosaccharide from growing alpha-1,4-glucan chains and the subsequent attachment of the oligosaccharide to the alpha-1,6 position. This is 1,4-alpha-glucan branching enzyme GlgB from Desulfitobacterium hafniense (strain Y51).